Here is a 117-residue protein sequence, read N- to C-terminus: Large ribosomal subunit protein bL17 (117 aa).

It belongs to the bacterial ribosomal protein bL17 family. As to quaternary structure, part of the 50S ribosomal subunit. Contacts protein L32.

This Exiguobacterium sp. (strain ATCC BAA-1283 / AT1b) protein is Large ribosomal subunit protein bL17.